We begin with the raw amino-acid sequence, 213 residues long: Kynurenine formamidase (213 aa).

W18 is a binding site for substrate. The Zn(2+) site is built by H48, H52, and D54. The active-site Proton donor/acceptor is the H58. The Zn(2+) site is built by H160 and E172.

Belongs to the Cyclase 1 superfamily. KynB family. As to quaternary structure, homodimer. Requires Zn(2+) as cofactor.

It catalyses the reaction N-formyl-L-kynurenine + H2O = L-kynurenine + formate + H(+). Its pathway is amino-acid degradation; L-tryptophan degradation via kynurenine pathway; L-kynurenine from L-tryptophan: step 2/2. In terms of biological role, catalyzes the hydrolysis of N-formyl-L-kynurenine to L-kynurenine, the second step in the kynurenine pathway of tryptophan degradation. The polypeptide is Kynurenine formamidase (Burkholderia ambifaria (strain MC40-6)).